Consider the following 165-residue polypeptide: Endoribonuclease YbeY (165 aa).

His-119, His-123, and His-129 together coordinate Zn(2+).

Belongs to the endoribonuclease YbeY family. It depends on Zn(2+) as a cofactor.

The protein resides in the cytoplasm. Functionally, single strand-specific metallo-endoribonuclease involved in late-stage 70S ribosome quality control and in maturation of the 3' terminus of the 16S rRNA. This chain is Endoribonuclease YbeY, found in Streptomyces griseus subsp. griseus (strain JCM 4626 / CBS 651.72 / NBRC 13350 / KCC S-0626 / ISP 5235).